The following is a 345-amino-acid chain: Opioid-binding protein/cell adhesion molecule (345 aa).

The signal sequence occupies residues 1 to 27; the sequence is MGVCGSLFQPWKCLVVVSLRLLFLVPT. 3 consecutive Ig-like C2-type domains span residues 39 to 126, 136 to 219, and 223 to 310; these read PKAM…PKTS, PQIM…VKIT, and PPYI…ASIT. Residues Asn44, Asn70, and Asn140 are each glycosylated (N-linked (GlcNAc...) asparagine). An intrachain disulfide couples Cys57 to Cys115. Cystine bridges form between Cys157/Cys202 and Cys244/Cys296. Asn285, Asn293, and Asn306 each carry an N-linked (GlcNAc...) asparagine glycan. The GPI-anchor amidated asparagine moiety is linked to residue Asn322. Residues 323–345 constitute a propeptide, removed in mature form; that stretch reads SASRALACLWLSGTLFAHFFIKF.

Belongs to the immunoglobulin superfamily. IgLON family.

It is found in the cell membrane. Its function is as follows. Binds opioids in the presence of acidic lipids; probably involved in cell contact. In Bos taurus (Bovine), this protein is Opioid-binding protein/cell adhesion molecule (OPCML).